A 248-amino-acid polypeptide reads, in one-letter code: Biosynthetic peptidoglycan transglycosylase (248 aa).

Residues 20–42 (WLRWLMAAPLLFAAASVLQVLIL) traverse the membrane as a helical segment.

It belongs to the glycosyltransferase 51 family.

The protein localises to the cell inner membrane. It carries out the reaction [GlcNAc-(1-&gt;4)-Mur2Ac(oyl-L-Ala-gamma-D-Glu-L-Lys-D-Ala-D-Ala)](n)-di-trans,octa-cis-undecaprenyl diphosphate + beta-D-GlcNAc-(1-&gt;4)-Mur2Ac(oyl-L-Ala-gamma-D-Glu-L-Lys-D-Ala-D-Ala)-di-trans,octa-cis-undecaprenyl diphosphate = [GlcNAc-(1-&gt;4)-Mur2Ac(oyl-L-Ala-gamma-D-Glu-L-Lys-D-Ala-D-Ala)](n+1)-di-trans,octa-cis-undecaprenyl diphosphate + di-trans,octa-cis-undecaprenyl diphosphate + H(+). It participates in cell wall biogenesis; peptidoglycan biosynthesis. In terms of biological role, peptidoglycan polymerase that catalyzes glycan chain elongation from lipid-linked precursors. This chain is Biosynthetic peptidoglycan transglycosylase, found in Xanthomonas euvesicatoria pv. vesicatoria (strain 85-10) (Xanthomonas campestris pv. vesicatoria).